We begin with the raw amino-acid sequence, 226 residues long: MVLSDFDRTLSDEKDNFIIKQEVVEVVNKFSAKFLFFVVTGRERKYMDILAKGLFPTGWIIENGGIIILRDKEIKLVDEKWYKIRKNLAKILDKNGIKYSLGEVIIYVNSAIDYKDKLDKINEAKIEWNRSDAMIMPKNVSKGEAVKILKSILNFEGVTIAIGDSQNDISLFSVADIKVAVANALPEIKAISDIVLDKEDGIGVMRFLEKILNDGSYLEKLIGFRK.

Asp-5 serves as the catalytic Nucleophile. The Mg(2+) site is built by Asp-5 and Asp-7. Residue Lys-142 participates in substrate binding. Residues Asp-164 and Asp-168 each coordinate Mg(2+).

This sequence belongs to the archaeal SPP-like hydrolase family. Requires Mg(2+) as cofactor.

It catalyses the reaction 2-phosphoglycolate + H2O = glycolate + phosphate. Its function is as follows. Catalyzes the dephosphorylation of 2-phosphoglycolate. This Sulfurisphaera tokodaii (strain DSM 16993 / JCM 10545 / NBRC 100140 / 7) (Sulfolobus tokodaii) protein is Phosphoglycolate phosphatase.